The sequence spans 482 residues: BEL1-like homeodomain protein 7 (482 aa).

The segment at 118-134 (SKYLKAAQELLDETVNV) is SR/KY domain. Positions 167 to 238 (ERQELQSKLS…CLRDAISGQI (72 aa)) are BELL domain. Residues 285 to 347 (TWRPQRGLPD…NARVRLWKPM (63 aa)) constitute a DNA-binding region (homeobox). The interval 358–401 (DALQENDPNQSSENTPEITEIQELQTESSSNNGHVPGVASSSMR) is disordered. A compositionally biased stretch (polar residues) spans 363–401 (NDPNQSSENTPEITEIQELQTESSSNNGHVPGVASSSMR).

The protein belongs to the TALE/BELL homeobox family. May form heterodimeric complexes with TALE/KNOX proteins.

The protein resides in the nucleus. The sequence is that of BEL1-like homeodomain protein 7 (BLH7) from Arabidopsis thaliana (Mouse-ear cress).